The following is a 360-amino-acid chain: Peptide chain release factor 1 (360 aa).

Q235 bears the N5-methylglutamine mark. A compositionally biased stretch (polar residues) spans 285–295 (AQQASEASTRK). The disordered stretch occupies residues 285-305 (AQQASEASTRKSLIGSGDRSD).

Belongs to the prokaryotic/mitochondrial release factor family. Methylated by PrmC. Methylation increases the termination efficiency of RF1.

Its subcellular location is the cytoplasm. Peptide chain release factor 1 directs the termination of translation in response to the peptide chain termination codons UAG and UAA. This is Peptide chain release factor 1 from Thiobacillus denitrificans (strain ATCC 25259 / T1).